Here is a 429-residue protein sequence, read N- to C-terminus: Glutamyl-tRNA reductase (429 aa).

Substrate is bound by residues 50–53 (TCNR), Ser-108, 113–115 (EPQ), and Gln-119. Cys-51 (nucleophile) is an active-site residue. 188–193 (GAGEMI) contributes to the NADP(+) binding site.

The protein belongs to the glutamyl-tRNA reductase family. As to quaternary structure, homodimer.

It carries out the reaction (S)-4-amino-5-oxopentanoate + tRNA(Glu) + NADP(+) = L-glutamyl-tRNA(Glu) + NADPH + H(+). The protein operates within porphyrin-containing compound metabolism; protoporphyrin-IX biosynthesis; 5-aminolevulinate from L-glutamyl-tRNA(Glu): step 1/2. In terms of biological role, catalyzes the NADPH-dependent reduction of glutamyl-tRNA(Glu) to glutamate 1-semialdehyde (GSA). This is Glutamyl-tRNA reductase from Polaromonas naphthalenivorans (strain CJ2).